The chain runs to 142 residues: Hemoglobin subunit alpha-1 (142 aa).

Ser-1 carries the N-acetylserine modification. The Globin domain maps to 1–142; it reads SLSDKDKAAV…VALALAERYR (142 aa). An O2-binding site is contributed by His-59. His-88 provides a ligand contact to heme b.

It belongs to the globin family. Hb1 is a heterotetramer of two alpha-2 chains and two beta chains, while Hb2 is a heterotetramer of two alpha-2 chains and two beta chains. Red blood cells.

In terms of biological role, involved in oxygen transport from gills to the various peripheral tissues. In Notothenia angustata (Rockcod), this protein is Hemoglobin subunit alpha-1 (hba1).